Consider the following 627-residue polypeptide: tRNA uridine 5-carboxymethylaminomethyl modification enzyme MnmG (627 aa).

FAD is bound by residues 13 to 18, V125, and S180; that span reads GGGHAG. NAD(+) is bound at residue 274-288; that stretch reads GPRYCPSIEDKVVRF. Q371 provides a ligand contact to FAD.

The protein belongs to the MnmG family. In terms of assembly, homodimer. Heterotetramer of two MnmE and two MnmG subunits. FAD serves as cofactor.

It is found in the cytoplasm. In terms of biological role, NAD-binding protein involved in the addition of a carboxymethylaminomethyl (cmnm) group at the wobble position (U34) of certain tRNAs, forming tRNA-cmnm(5)s(2)U34. The chain is tRNA uridine 5-carboxymethylaminomethyl modification enzyme MnmG from Francisella tularensis subsp. holarctica (strain FTNF002-00 / FTA).